Reading from the N-terminus, the 603-residue chain is DNA mismatch repair protein MutL (603 aa).

The protein belongs to the DNA mismatch repair MutL/HexB family.

Its function is as follows. This protein is involved in the repair of mismatches in DNA. It is required for dam-dependent methyl-directed DNA mismatch repair. May act as a 'molecular matchmaker', a protein that promotes the formation of a stable complex between two or more DNA-binding proteins in an ATP-dependent manner without itself being part of a final effector complex. In Bradyrhizobium diazoefficiens (strain JCM 10833 / BCRC 13528 / IAM 13628 / NBRC 14792 / USDA 110), this protein is DNA mismatch repair protein MutL.